The following is a 1977-amino-acid chain: Echinoderm microtubule-associated protein-like 5 (1977 aa).

10 WD repeats span residues glycine 59–valine 100, valine 104–methionine 145, glycine 148–lysine 187, glycine 195–glutamine 233, alanine 235–aspartate 273, glycine 280–glutamine 321, histidine 323–arginine 362, aspartate 406–glycine 445, glycine 449–serine 488, and glycine 561–aspartate 601. The interval glutamate 609–leucine 629 is disordered. Residues asparagine 615–leucine 629 show a composition bias toward acidic residues. 9 WD repeats span residues glycine 725–isoleucine 766, tyrosine 770–valine 811, glycine 814–lysine 853, glycine 861–lysine 900, alanine 901–alanine 940, histidine 996–alanine 1035, lysine 1038–serine 1077, histidine 1080–valine 1120, and alanine 1236–lysine 1276. 2 disordered regions span residues lysine 1276–aspartate 1297 and proline 1323–lysine 1363. Residues serine 1281–tyrosine 1294 show a composition bias toward acidic residues. The span at glutamine 1326 to glycine 1337 shows a compositional bias: basic and acidic residues. WD repeat units follow at residues glutamate 1420–isoleucine 1471, serine 1475–serine 1516, glycine 1519–lysine 1558, alanine 1568–alanine 1606, alanine 1608–arginine 1654, glycine 1699–lysine 1739, asparagine 1741–arginine 1782, aspartate 1783–arginine 1822, alanine 1895–lysine 1934, and glycine 1940–histidine 1977.

Belongs to the WD repeat EMAP family.

It localises to the cytoplasm. It is found in the cytoskeleton. May modify the assembly dynamics of microtubules, such that microtubules are slightly longer, but more dynamic. In Mus musculus (Mouse), this protein is Echinoderm microtubule-associated protein-like 5 (Eml5).